The chain runs to 164 residues: R-phycoerythrin alpha chain (164 aa).

Residues Asn47, Lys81, Cys82, Arg84, His88, Arg137, Cys139, and Arg142 each coordinate (2R,3E)-phycoerythrobilin.

This sequence belongs to the phycobiliprotein family. As to quaternary structure, heterododecamer of 6 alpha and 6 beta chains. The basic functional unit of phycobiliproteins is a ring-shaped hexamer formed from two back-to-back trimers contacting via the alpha chain subunits. The trimers are composed of alpha/beta subunit heterodimers arranged around a three-fold axis of symmetry. The phycoerythrins also contain a gamma subunit which is located in the center of the hexamer. Contains two covalently linked phycoerythrobilin chromophores.

Its subcellular location is the plastid. It is found in the chloroplast thylakoid membrane. In terms of biological role, light-harvesting photosynthetic tetrapyrrole chromophore-protein from the phycobiliprotein complex. In Agarophyton chilense (Red seaweed), this protein is R-phycoerythrin alpha chain (rpeA).